The primary structure comprises 211 residues: Receptor expression-enhancing protein 6 (211 aa).

The next 2 helical transmembrane spans lie at 44 to 64 and 89 to 109; these read LSLY…IGFV and WVVY…LSWF. The tract at residues 190-211 is disordered; it reads AGPSTPLEADLKPSQTPQPKDK. A compositionally biased stretch (polar residues) spans 202-211; the sequence is PSQTPQPKDK.

Belongs to the DP1 family. In terms of assembly, interacts with STX3. Interacts with clathrin. Expressed in circumvallate papillae and testis. Expressed in the retina. Isoform 1 is predominantly present in mature optic cups. Isoform 1 expression is confined to the cell body and inner segment of developing rod photoreceptor cells.

The protein localises to the endoplasmic reticulum membrane. The protein resides in the cytoplasmic vesicle. It localises to the clathrin-coated vesicle membrane. In terms of biological role, required for correct function and survival of retinal photoreceptors. Required for retinal development. In rod photoreceptors, facilitates stability and/or trafficking of guanylate cyclases and is required to maintain endoplasmic reticulum and mitochondrial homeostasis. May play a role in clathrin-coated intracellular vesicle trafficking of proteins from the endoplasmic reticulum to the retinal rod plasma membrane. The protein is Receptor expression-enhancing protein 6 (REEP6) of Homo sapiens (Human).